The primary structure comprises 344 residues: Phosphoribosylformylglycinamidine cyclo-ligase (344 aa).

The protein belongs to the AIR synthase family.

The protein resides in the cytoplasm. It catalyses the reaction 2-formamido-N(1)-(5-O-phospho-beta-D-ribosyl)acetamidine + ATP = 5-amino-1-(5-phospho-beta-D-ribosyl)imidazole + ADP + phosphate + H(+). The protein operates within purine metabolism; IMP biosynthesis via de novo pathway; 5-amino-1-(5-phospho-D-ribosyl)imidazole from N(2)-formyl-N(1)-(5-phospho-D-ribosyl)glycinamide: step 2/2. The chain is Phosphoribosylformylglycinamidine cyclo-ligase from Neisseria meningitidis serogroup C (strain 053442).